The chain runs to 141 residues: MKLTINILFCLILISQYNSANGNLRDLFNNVRGSISSSANKIRQDVKTLFHPSDKSGNKESSNIVFVEDKDEGAVGPARDNKPVAVTPAPVVSTTTQASAPTVATNGTATGGKDDKGRENFNGGCLAGYMRTADGRCKPTF.

The signal sequence occupies residues 1–22 (MKLTINILFCLILISQYNSANG). Positions 23-118 (NLRDLFNNVR…ATGGKDDKGR (96 aa)) are excised as a propeptide. A compositionally biased stretch (basic and acidic residues) spans 46–58 (VKTLFHPSDKSGN). The interval 46–118 (VKTLFHPSDK…ATGGKDDKGR (73 aa)) is disordered. Residues 83–98 (PVAVTPAPVVSTTTQA) are compositionally biased toward low complexity. Residues 99-108 (SAPTVATNGT) show a composition bias toward polar residues. Cysteine 125 and cysteine 137 are joined by a disulfide.

The protein belongs to the GBP/PSP1/paralytic peptide family.

Its function is as follows. Mediates the spreading of plasmatocytes to foreign surfaces. Plasmocytes are a class of hemocytes involved in insect cellular immunity. This Chrysodeixis includens (Soybean looper) protein is Plasmatocyte-spreading peptide (PSP1).